A 407-amino-acid polypeptide reads, in one-letter code: Phosphopentomutase (407 aa).

Mn(2+) is bound by residues Asp10, Asp306, His311, Asp347, His348, and His359.

It belongs to the phosphopentomutase family. Mn(2+) is required as a cofactor.

Its subcellular location is the cytoplasm. It catalyses the reaction 2-deoxy-alpha-D-ribose 1-phosphate = 2-deoxy-D-ribose 5-phosphate. It carries out the reaction alpha-D-ribose 1-phosphate = D-ribose 5-phosphate. It functions in the pathway carbohydrate degradation; 2-deoxy-D-ribose 1-phosphate degradation; D-glyceraldehyde 3-phosphate and acetaldehyde from 2-deoxy-alpha-D-ribose 1-phosphate: step 1/2. Its function is as follows. Isomerase that catalyzes the conversion of deoxy-ribose 1-phosphate (dRib-1-P) and ribose 1-phosphate (Rib-1-P) to deoxy-ribose 5-phosphate (dRib-5-P) and ribose 5-phosphate (Rib-5-P), respectively. This Sodalis glossinidius (strain morsitans) protein is Phosphopentomutase.